We begin with the raw amino-acid sequence, 155 residues long: Ribosomal RNA large subunit methyltransferase H (155 aa).

S-adenosyl-L-methionine is bound by residues leucine 73, glycine 104, and 123–128; that span reads LSPLTL.

Belongs to the RNA methyltransferase RlmH family. In terms of assembly, homodimer.

The protein resides in the cytoplasm. The catalysed reaction is pseudouridine(1915) in 23S rRNA + S-adenosyl-L-methionine = N(3)-methylpseudouridine(1915) in 23S rRNA + S-adenosyl-L-homocysteine + H(+). Specifically methylates the pseudouridine at position 1915 (m3Psi1915) in 23S rRNA. This chain is Ribosomal RNA large subunit methyltransferase H, found in Pseudomonas entomophila (strain L48).